Here is a 276-residue protein sequence, read N- to C-terminus: Ribonuclease 3 (276 aa).

In terms of domain architecture, RNase III spans 30-161 (LTAFIRSLFK…LTGAIYLDRG (132 aa)). Mg(2+) is bound at residue E74. Residue D78 is part of the active site. Mg(2+)-binding residues include D147 and E150. E150 is a catalytic residue. The region spanning 188–257 (NHKSRLIEHT…AEEAMGALER (70 aa)) is the DRBM domain.

This sequence belongs to the ribonuclease III family. As to quaternary structure, homodimer. Mg(2+) is required as a cofactor.

It localises to the cytoplasm. The enzyme catalyses Endonucleolytic cleavage to 5'-phosphomonoester.. Digests double-stranded RNA. Involved in the processing of primary rRNA transcript to yield the immediate precursors to the large and small rRNAs (23S and 16S). Processes some mRNAs, and tRNAs when they are encoded in the rRNA operon. Processes pre-crRNA and tracrRNA of type II CRISPR loci if present in the organism. The chain is Ribonuclease 3 from Chlorobium luteolum (strain DSM 273 / BCRC 81028 / 2530) (Pelodictyon luteolum).